We begin with the raw amino-acid sequence, 370 residues long: tRNA-specific 2-thiouridylase MnmA (370 aa).

ATP is bound by residues 14–21 (GMSGGVDS) and methionine 40. The segment at 100 to 102 (NPD) is interaction with target base in tRNA. Cysteine 105 functions as the Nucleophile in the catalytic mechanism. A disulfide bridge connects residues cysteine 105 and cysteine 205. Glycine 129 provides a ligand contact to ATP. The tract at residues 155–157 (KDQ) is interaction with tRNA. Catalysis depends on cysteine 205, which acts as the Cysteine persulfide intermediate. The tract at residues 321-322 (RY) is interaction with tRNA.

This sequence belongs to the MnmA/TRMU family.

It localises to the cytoplasm. It catalyses the reaction S-sulfanyl-L-cysteinyl-[protein] + uridine(34) in tRNA + AH2 + ATP = 2-thiouridine(34) in tRNA + L-cysteinyl-[protein] + A + AMP + diphosphate + H(+). Catalyzes the 2-thiolation of uridine at the wobble position (U34) of tRNA, leading to the formation of s(2)U34. The protein is tRNA-specific 2-thiouridylase MnmA of Bordetella avium (strain 197N).